A 173-amino-acid chain; its full sequence is Probable WRKY transcription factor 50 (173 aa).

The segment at residues 107-172 is a DNA-binding region (WRKY); it reads SEVEVLDDGF…YEGSHNHSSM (66 aa).

The protein belongs to the WRKY group II-c family.

The protein resides in the nucleus. Its function is as follows. Transcription factor. Interacts specifically with the W box (5'-(T)TGAC[CT]-3'), a frequently occurring elicitor-responsive cis-acting element. This Arabidopsis thaliana (Mouse-ear cress) protein is Probable WRKY transcription factor 50 (WRKY50).